The chain runs to 160 residues: SsrA-binding protein (160 aa).

The protein belongs to the SmpB family.

It is found in the cytoplasm. Required for rescue of stalled ribosomes mediated by trans-translation. Binds to transfer-messenger RNA (tmRNA), required for stable association of tmRNA with ribosomes. tmRNA and SmpB together mimic tRNA shape, replacing the anticodon stem-loop with SmpB. tmRNA is encoded by the ssrA gene; the 2 termini fold to resemble tRNA(Ala) and it encodes a 'tag peptide', a short internal open reading frame. During trans-translation Ala-aminoacylated tmRNA acts like a tRNA, entering the A-site of stalled ribosomes, displacing the stalled mRNA. The ribosome then switches to translate the ORF on the tmRNA; the nascent peptide is terminated with the 'tag peptide' encoded by the tmRNA and targeted for degradation. The ribosome is freed to recommence translation, which seems to be the essential function of trans-translation. The sequence is that of SsrA-binding protein from Histophilus somni (strain 129Pt) (Haemophilus somnus).